Consider the following 361-residue polypeptide: Probable mannose-1-phosphate guanylyltransferase 2 (361 aa).

Residues Leu-6 and Val-7 each contribute to the GDP-alpha-D-mannose site. Diphosphate is bound by residues Gly-9, Gly-11, Thr-12, Arg-13, and Lys-23. GDP-alpha-D-mannose-binding residues include Gly-85, Asn-109, Asp-111, Gly-146, and Asn-173.

This sequence belongs to the transferase hexapeptide repeat family.

It carries out the reaction alpha-D-mannose 1-phosphate + GTP + H(+) = GDP-alpha-D-mannose + diphosphate. It functions in the pathway nucleotide-sugar biosynthesis; GDP-alpha-D-mannose biosynthesis; GDP-alpha-D-mannose from alpha-D-mannose 1-phosphate (GTP route): step 1/1. Catalyzes a reaction of the Smirnoff-Wheeler pathway, the major route to ascorbate biosynthesis in plants. The sequence is that of Probable mannose-1-phosphate guanylyltransferase 2 from Oryza sativa subsp. japonica (Rice).